Consider the following 245-residue polypeptide: Glycerophosphodiester phosphodiesterase (245 aa).

A GP-PDE domain is found at 2 to 241 (TKIFAHRGFK…DFPDRAVKIR (240 aa)). Catalysis depends on His-7, which acts as the Proton acceptor. A divalent metal cation-binding residues include Glu-34 and Asp-36. His-49 acts as the Proton donor in catalysis. Glu-110 lines the a divalent metal cation pocket.

It belongs to the glycerophosphoryl diester phosphodiesterase family. Ni(2+) is required as a cofactor. Requires Co(2+) as cofactor. The cofactor is Mn(2+).

The enzyme catalyses a sn-glycero-3-phosphodiester + H2O = an alcohol + sn-glycerol 3-phosphate + H(+). Its activity is regulated as follows. Inhibited by EDTA and various organic solvents such as chloroform, toluene or benzene. In terms of biological role, glycerophosphodiester phosphodiesterase hydrolyzes glycerophosphodiesters into glycerol-3-phosphate (G3P) and the corresponding alcohol. Can hydrolyze the model substrate bis-(p-nitrophenyl phosphate) (bis(pNPP)) to p-nitrophenol. Can also catalyze the degradation of diphenyl phosphate (DPHP) to phenyl phosphate (PHP). DPHP is an aryl phosphate ester used as a chemical additive and an industrial catalyst that can easily spread to the environment and exhibits toxicity toward organisms. The sequence is that of Glycerophosphodiester phosphodiesterase from Bacillus altitudinis.